The primary structure comprises 420 residues: Gamma-glutamyl phosphate reductase (420 aa).

This sequence belongs to the gamma-glutamyl phosphate reductase family.

The protein localises to the cytoplasm. It carries out the reaction L-glutamate 5-semialdehyde + phosphate + NADP(+) = L-glutamyl 5-phosphate + NADPH + H(+). It participates in amino-acid biosynthesis; L-proline biosynthesis; L-glutamate 5-semialdehyde from L-glutamate: step 2/2. Catalyzes the NADPH-dependent reduction of L-glutamate 5-phosphate into L-glutamate 5-semialdehyde and phosphate. The product spontaneously undergoes cyclization to form 1-pyrroline-5-carboxylate. This Streptococcus pneumoniae (strain P1031) protein is Gamma-glutamyl phosphate reductase.